The sequence spans 762 residues: cGMP-dependent protein kinase 2 (762 aa).

The segment at 1–25 is disordered; that stretch reads MGNGSVKPKHSKHPDGQSGNLSNEA. G2 is lipidated: N-myristoyl glycine. 2 positions are modified to phosphoserine: S110 and S117. The interval 112–138 is disordered; sequence LVSLHSRRGAKAGVSAEPTSRTYDLNK. Residues 168–283 are cGMP-binding, high affinity; cAMP-binding, moderate affinity; sequence FLKRLDPQQI…DEEYRNFLRS (116 aa). 3',5'-cyclic GMP-binding positions include 232 to 235, 242 to 243, K347, 356 to 359, 366 to 367, D412, and R415; these read GELA, RT, GEKA, and RS. The interval 286–416 is cGMP-binding, high affinity; cAMP-binding, low affinity; that stretch reads LLKNLPEDKL…TLNRDDEKRH (131 aa). S431 is subject to Phosphoserine. The Protein kinase domain occupies 453–711; sequence LEIIATLGVG…INDIKKHRWL (259 aa). Residues 459–467 and K482 each bind ATP; that span reads LGVGGFGRV. The active-site Proton acceptor is the D576. A Phosphothreonine modification is found at T609. The AGC-kinase C-terminal domain maps to 712-762; the sequence is NGFNWEGLKARSLPSPLRRELSGPIDHSYFDKYPPEKGVPPDEMSGWDKDF. Residues 740–762 form a disordered region; it reads YFDKYPPEKGVPPDEMSGWDKDF.

This sequence belongs to the protein kinase superfamily. AGC Ser/Thr protein kinase family. cGMP subfamily. In terms of assembly, interacts with GRIA1/GLUR1. Myristoylation mediates membrane localization. In terms of tissue distribution, highly expressed in intestinal mucosa and is 20 times less abundant in brain and kidney. Expressed in jejunum, in the apical domain of the villus epithelium.

The protein resides in the apical cell membrane. It localises to the cell membrane. The catalysed reaction is L-seryl-[protein] + ATP = O-phospho-L-seryl-[protein] + ADP + H(+). It catalyses the reaction L-threonyl-[protein] + ATP = O-phospho-L-threonyl-[protein] + ADP + H(+). With respect to regulation, binding of cGMP results in enzyme activation. In terms of biological role, crucial regulator of intestinal secretion and bone growth. Phosphorylates and activates CFTR on the plasma membrane. Plays a key role in intestinal secretion by regulating cGMP-dependent translocation of CFTR in jejunum. Acts downstream of NMDAR to activate the plasma membrane accumulation of GRIA1/GLUR1 in synapse and increase synaptic plasticity. Phosphorylates GRIA1/GLUR1 at Ser-863. Acts as regulator of gene expression and activator of the extracellular signal-regulated kinases MAPK3/ERK1 and MAPK1/ERK2 in mechanically stimulated osteoblasts. Under fluid shear stress, mediates ERK activation and subsequent induction of FOS, FOSL1/FRA1, FOSL2/FRA2 and FOSB that play a key role in the osteoblast anabolic response to mechanical stimulation. The sequence is that of cGMP-dependent protein kinase 2 (Prkg2) from Rattus norvegicus (Rat).